Here is a 346-residue protein sequence, read N- to C-terminus: MLVLGIESSCDETGLALYDTERGLLAHALHSQIAMHREYGGVVPELASRDHIRRALPLLEEVLAASGARRDDIDAIAFTQGPGLAGALLVGASIANALAFAWDKPTIGIHHLEGHLLSPLLVAEPPPFPFVALLVSGGHTQLMRVSDVGVYETLGETLDDAAGEAFDKTAKLLGLGYPGGPEVSRLAEAGTPGAVVLPRPMLHSGDLDFSFSGLKTAVLTQMKKLEAAHAGGAVLERAKADFARGFVDAAVDVLVAKSLAALKATRLKRLVVAGGVGANRQLRAALSAAAQKRGFDVHYPDLALCTDNGAMIALAGALRLARWPSQASRDYAFTVKPRWDLASLAR.

Residues histidine 111 and histidine 115 each coordinate Fe cation. Substrate is bound by residues 134–138 (LVSGG), aspartate 167, glycine 180, and asparagine 279. A Fe cation-binding site is contributed by aspartate 307.

It belongs to the KAE1 / TsaD family. Requires Fe(2+) as cofactor.

Its subcellular location is the cytoplasm. It carries out the reaction L-threonylcarbamoyladenylate + adenosine(37) in tRNA = N(6)-L-threonylcarbamoyladenosine(37) in tRNA + AMP + H(+). Its function is as follows. Required for the formation of a threonylcarbamoyl group on adenosine at position 37 (t(6)A37) in tRNAs that read codons beginning with adenine. Is involved in the transfer of the threonylcarbamoyl moiety of threonylcarbamoyl-AMP (TC-AMP) to the N6 group of A37, together with TsaE and TsaB. TsaD likely plays a direct catalytic role in this reaction. The protein is tRNA N6-adenosine threonylcarbamoyltransferase of Burkholderia pseudomallei (strain 1106a).